Reading from the N-terminus, the 641-residue chain is Putative phagocytic receptor 1a (641 aa).

The first 23 residues, 1–23 (MKINKKQIVFFILFSIFLNHVNG), serve as a signal peptide directing secretion. The Extracellular segment spans residues 24-279 (IFYLPGMIPH…ESNDNSVHWF (256 aa)). Residues 280-300 (SILNSLMIVFILTVMVAMIII) form a helical membrane-spanning segment. Residues 301-349 (RTLKKDIRRYTSIDTSEDRDSQEETGWKMIHGDVFRPPSHPMLLSVCIG) are Cytoplasmic-facing. The chain crosses the membrane as a helical span at residues 350–370 (SGVQIFSMTLITMIFAVLGFL). Over 371-374 (SPAN) the chain is Extracellular. The helical transmembrane segment at 375-395 (IGGLATALIVLFVLSAMFAGY) threads the bilayer. Residues 396-413 (FSTRVFTIFKGRNWKKNT) are Cytoplasmic-facing. A helical transmembrane segment spans residues 414 to 434 (IYTALSMPGIIFGIFFFVNMF). The Extracellular portion of the chain corresponds to 435–445 (LRGAKSSAAVP). The chain crosses the membrane as a helical span at residues 446–466 (FGTFASIIAMWFGISVPLVFL). The Cytoplasmic segment spans residues 467–502 (GSYFASKKPVPEDPVRTNQIPRQVPDQIWYMNPYLS). The chain crosses the membrane as a helical span at residues 503-523 (ILMGGILPFGAVFIELHFILT). Residues 524–532 (SLWDNQFYY) lie on the Extracellular side of the membrane. The helical transmembrane segment at 533–553 (IFGFLFIVLMILIVTSAEISI) threads the bilayer. Over 554–578 (VMCYFQLCAEDHHWWWRSFLTAGSS) the chain is Cytoplasmic. The chain crosses the membrane as a helical span at residues 579-599 (SLYMFIYSVSFFRYLGITKFI). Residues 600–608 (SSLLDFSYS) lie on the Extracellular side of the membrane. A helical transmembrane segment spans residues 609-629 (FIMSLAFAALTGTIGFYSCYF). The Cytoplasmic portion of the chain corresponds to 630–641 (LVRKIYSSIHIN).

Belongs to the nonaspanin (TM9SF) (TC 9.A.2) family.

Its subcellular location is the membrane. Involved in adhesion, phagocytosis of hydrophilic particles and intracellular killing of bacteria. Associates with proteins harboring glycine-rich transmembrane domains and ensures their efficient localization to the cell surface. In Dictyostelium discoideum (Social amoeba), this protein is Putative phagocytic receptor 1a (phg1a).